The primary structure comprises 153 residues: Vasotocin-neurophysin VT 1 (153 aa).

Residues 1 to 19 (MPQCALLLSLLGLLALSSA) form the signal peptide. Cys20 and Cys25 are joined by a disulfide. The residue at position 28 (Gly28) is a Glycine amide. 7 disulfides stabilise this stretch: Cys41/Cys85, Cys44/Cys58, Cys52/Cys75, Cys59/Cys65, Cys92/Cys105, Cys99/Cys117, and Cys106/Cys111.

This sequence belongs to the vasopressin/oxytocin family. Post-translationally, seven disulfide bonds are present in neurophysin.

Its subcellular location is the secreted. Its function is as follows. Vasotocin is probably an antidiuretic hormone. This chain is Vasotocin-neurophysin VT 1, found in Takifugu rubripes (Japanese pufferfish).